We begin with the raw amino-acid sequence, 214 residues long: Endosomal/vacuolar adapter protein YPT35 (214 aa).

Residues 1–63 (MNDKISFLPP…ATITRTRPRR (63 aa)) form a disordered region. The short motif at 5 to 15 (ISFLPPEPIQL) is the PxP element. Residues 16-31 (LDEDSTEPELDIDSQQ) are compositionally biased toward acidic residues. Over residues 38–58 (SASNSNDSTSHSNDCGATITR) the composition is skewed to low complexity. Residues Ser65 and Ser66 each carry the phosphoserine modification. Residues 73–213 (FQKAHVSDCT…IQFLEPSKRV (141 aa)) enclose the PX domain.

The protein belongs to the YPT35 family. Interacts with RBD2, YIF1, YIP1 and YIP4.

It localises to the endosome membrane. Its subcellular location is the vacuole membrane. In terms of biological role, recruits the lipid transfer protein VPS13 to endosomal and vacuolar membranes. This chain is Endosomal/vacuolar adapter protein YPT35 (YPT35), found in Saccharomyces cerevisiae (strain YJM789) (Baker's yeast).